Here is a 296-residue protein sequence, read N- to C-terminus: Haloalkane dehalogenase (296 aa).

Residues 31–155 (PILFQHGNPT…QDRDLFQAFR (125 aa)) enclose the AB hydrolase-1 domain. Aspartate 108 serves as the catalytic Nucleophile. Glutamate 132 (proton donor) is an active-site residue. Histidine 272 functions as the Proton acceptor in the catalytic mechanism.

This sequence belongs to the haloalkane dehalogenase family. Type 2 subfamily. In terms of assembly, monomer.

The protein resides in the periplasm. The catalysed reaction is 1-haloalkane + H2O = a halide anion + a primary alcohol + H(+). It carries out the reaction (3R,6R)-1,3,4,6-tetrachlorocyclohexa-1,4-diene + 2 H2O = 2,5-dichlorocyclohexa-2,5-dien-1,4-diol + 2 chloride + 2 H(+). It participates in xenobiotic degradation; gamma-hexachlorocyclohexane degradation. Catalyzes hydrolytic cleavage of carbon-halogen bonds in halogenated aliphatic compounds, leading to the formation of the corresponding primary alcohols, halide ions and protons. Is involved in the degradation of the important environmental pollutant gamma-hexachlorocyclohexane (gamma-HCH or lindane) as it also catalyzes conversion of 1,3,4,6-tetrachloro-1,4-cyclohexadiene (1,4-TCDN) to 2,5-dichloro-2,5-cyclohexadiene-1,4-diol (2,5-DDOL) via the intermediate 2,4,5-trichloro-2,5-cyclohexadiene-1-ol (2,4,5-DNOL). This chain is Haloalkane dehalogenase, found in Sphingobium indicum (strain DSM 16412 / CCM 7286 / MTCC 6364 / B90A).